Here is a 172-residue protein sequence, read N- to C-terminus: Ribosome maturation factor RimM (172 aa).

The PRC barrel domain occupies 92-167; sequence ENEFYHSDLV…VILKLPEIIG (76 aa).

It belongs to the RimM family. Binds ribosomal protein uS19.

The protein resides in the cytoplasm. Functionally, an accessory protein needed during the final step in the assembly of 30S ribosomal subunit, possibly for assembly of the head region. Essential for efficient processing of 16S rRNA. May be needed both before and after RbfA during the maturation of 16S rRNA. It has affinity for free ribosomal 30S subunits but not for 70S ribosomes. This Ehrlichia ruminantium (strain Gardel) protein is Ribosome maturation factor RimM.